The sequence spans 179 residues: Large ribosomal subunit protein uL5 (179 aa).

The protein belongs to the universal ribosomal protein uL5 family. In terms of assembly, part of the 50S ribosomal subunit; part of the 5S rRNA/L5/L18/L25 subcomplex. Contacts the 5S rRNA and the P site tRNA. Forms a bridge to the 30S subunit in the 70S ribosome.

In terms of biological role, this is one of the proteins that bind and probably mediate the attachment of the 5S RNA into the large ribosomal subunit, where it forms part of the central protuberance. In the 70S ribosome it contacts protein S13 of the 30S subunit (bridge B1b), connecting the 2 subunits; this bridge is implicated in subunit movement. Contacts the P site tRNA; the 5S rRNA and some of its associated proteins might help stabilize positioning of ribosome-bound tRNAs. The protein is Large ribosomal subunit protein uL5 of Methylococcus capsulatus (strain ATCC 33009 / NCIMB 11132 / Bath).